Here is a 350-residue protein sequence, read N- to C-terminus: Palmitoyltransferase erf2 (350 aa).

The Cytoplasmic portion of the chain corresponds to M1–A86. The helical transmembrane segment at F87–F107 threads the bilayer. Topologically, residues W108 to H112 are lumenal. Residues V113–F133 traverse the membrane as a helical segment. At K134 to R225 the chain is on the cytoplasmic side. Residues V182–L232 form the DHHC domain. C212 (S-palmitoyl cysteine intermediate) is an active-site residue. A helical transmembrane segment spans residues Y226–F246. Over Y247–A270 the chain is Lumenal. Residues G271–F291 traverse the membrane as a helical segment. The Cytoplasmic portion of the chain corresponds to C292–V350.

Belongs to the DHHC palmitoyltransferase family. ERF2/ZDHHC9 subfamily. As to quaternary structure, interacts with erf4. In terms of processing, autopalmitoylated.

It localises to the endoplasmic reticulum membrane. The protein resides in the golgi apparatus. It is found in the golgi stack membrane. It catalyses the reaction L-cysteinyl-[protein] + hexadecanoyl-CoA = S-hexadecanoyl-L-cysteinyl-[protein] + CoA. In terms of biological role, the erf2-erf4 complex is a palmitoyltransferase with a major role in driving sexual development. Palmitoylates ras1. Palmitoylates isp3. Palmitoylates rho3. This is Palmitoyltransferase erf2 from Schizosaccharomyces pombe (strain 972 / ATCC 24843) (Fission yeast).